The sequence spans 323 residues: Glucokinase (323 aa).

8-13 (GDVGGT) contributes to the ATP binding site.

It belongs to the bacterial glucokinase family.

It localises to the cytoplasm. The enzyme catalyses D-glucose + ATP = D-glucose 6-phosphate + ADP + H(+). The sequence is that of Glucokinase from Yersinia pseudotuberculosis serotype I (strain IP32953).